Here is an 80-residue protein sequence, read N- to C-terminus: Small ribosomal subunit protein bS18 (80 aa).

This sequence belongs to the bacterial ribosomal protein bS18 family. As to quaternary structure, part of the 30S ribosomal subunit. Forms a tight heterodimer with protein bS6.

Binds as a heterodimer with protein bS6 to the central domain of the 16S rRNA, where it helps stabilize the platform of the 30S subunit. This is Small ribosomal subunit protein bS18 from Beijerinckia indica subsp. indica (strain ATCC 9039 / DSM 1715 / NCIMB 8712).